The primary structure comprises 417 residues: Protein-lysine 6-oxidase (417 aa).

The signal sequence occupies residues Met1–Cys21. Positions Ala22–Gly168 are cleaved as a propeptide — removed by BMP1. The interval Tyr64–Thr89 is disordered. A compositionally biased stretch (low complexity) spans Gly73–Ala84. N-linked (GlcNAc...) asparagine glycans are attached at residues Asn81, Asn97, and Asn144. A disordered region spans residues Ala137–Pro174. At Tyr187 the chain carries Sulfotyrosine. The interval Pro213–Tyr417 is lysyl-oxidase like. 5 disulfide bridges follow: Cys238–Cys244, Cys291–Cys340, Cys324–Cys330, Cys351–Cys361, and Cys398–Cys412. The Cu cation site is built by His292, His294, and His296. Positions Lys320–Tyr355 form a cross-link, lysine tyrosylquinone (Lys-Tyr). 2',4',5'-topaquinone is present on Tyr355.

Belongs to the lysyl oxidase family. Interacts with MFAP4. Interacts (via propeptide) with EFEMP2; this interaction is strong and facilitates formation of ternary complexes with ELN during elastic fiber assembly; this interaction limits interaction of EFEMP2 with FBLN5. The cofactor is Cu cation. It depends on lysine tyrosylquinone residue as a cofactor. The lysine tyrosylquinone cross-link (LTQ) is generated by condensation of the epsilon-amino group of a lysine with a topaquinone produced by oxidation of tyrosine. Post-translationally, proteolytically cleaved by BMP1 which removes the propeptide. Also proteolytically cleaved by ADAMTS2 and ADAMTS14, but not by ADAMTS3, at an additional cleavage site downstream of the BMP1 cleavage site. The propeptide plays a role in directing the deposition of this enzyme to elastic fibers, via interaction with tropoelastin. Cleavage by BMP1 to remove the propeptide does not increase enzymatic activity but increases binding to collagen. Cleavage by ADAMTS2 produces a form with reduced collagen-binding activity. In terms of processing, sulfated at Tyr-187 and also at either Tyr-183 or Tyr-184 which enhances binding to collagen. In terms of tissue distribution, heart, placenta, skeletal muscle, kidney, lung and pancreas.

The protein localises to the secreted. The protein resides in the extracellular space. It catalyses the reaction L-lysyl-[protein] + O2 + H2O = (S)-2-amino-6-oxohexanoyl-[protein] + H2O2 + NH4(+). Functionally, responsible for the post-translational oxidative deamination of peptidyl lysine residues in precursors to fibrous collagen and elastin. Regulator of Ras expression. May play a role in tumor suppression. Plays a role in the aortic wall architecture. In Homo sapiens (Human), this protein is Protein-lysine 6-oxidase (LOX).